The chain runs to 39 residues: Bacteriocin SRCAM 602 (39 aa).

It belongs to the bacteriocin class IIA/YGNGV family.

It is found in the secreted. Its function is as follows. Bacteriocin with antibacterial activity against C.jejuni. The protein is Bacteriocin SRCAM 602 of Paenibacillus polymyxa (Bacillus polymyxa).